Here is a 426-residue protein sequence, read N- to C-terminus: S-adenosylmethionine synthase (426 aa).

His-22 serves as a coordination point for ATP. Residue Asp-24 coordinates Mg(2+). Glu-50 provides a ligand contact to K(+). L-methionine contacts are provided by Glu-63 and Gln-106. The segment at Gln-106–Ala-116 is flexible loop. Residues Asp-181 to Lys-183, Lys-257 to Phe-258, Asp-266, Arg-272 to Lys-273, Ala-289, and Lys-293 each bind ATP. Asp-266 provides a ligand contact to L-methionine. Residue Lys-297 participates in L-methionine binding.

The protein belongs to the AdoMet synthase family. Homotetramer; dimer of dimers. Requires Mg(2+) as cofactor. It depends on K(+) as a cofactor.

It is found in the cytoplasm. The catalysed reaction is L-methionine + ATP + H2O = S-adenosyl-L-methionine + phosphate + diphosphate. It participates in amino-acid biosynthesis; S-adenosyl-L-methionine biosynthesis; S-adenosyl-L-methionine from L-methionine: step 1/1. Catalyzes the formation of S-adenosylmethionine (AdoMet) from methionine and ATP. The overall synthetic reaction is composed of two sequential steps, AdoMet formation and the subsequent tripolyphosphate hydrolysis which occurs prior to release of AdoMet from the enzyme. In Synechocystis sp. (strain ATCC 27184 / PCC 6803 / Kazusa), this protein is S-adenosylmethionine synthase.